We begin with the raw amino-acid sequence, 266 residues long: Hydroxyethylthiazole kinase (266 aa).

Met45 provides a ligand contact to substrate. The ATP site is built by Arg120 and Thr165. Ala192 lines the substrate pocket.

It belongs to the Thz kinase family. Mg(2+) is required as a cofactor.

The enzyme catalyses 5-(2-hydroxyethyl)-4-methylthiazole + ATP = 4-methyl-5-(2-phosphooxyethyl)-thiazole + ADP + H(+). The protein operates within cofactor biosynthesis; thiamine diphosphate biosynthesis; 4-methyl-5-(2-phosphoethyl)-thiazole from 5-(2-hydroxyethyl)-4-methylthiazole: step 1/1. In terms of biological role, catalyzes the phosphorylation of the hydroxyl group of 4-methyl-5-beta-hydroxyethylthiazole (THZ). In Psychrobacter sp. (strain PRwf-1), this protein is Hydroxyethylthiazole kinase.